The chain runs to 479 residues: Phosphoglycerate kinase, glycosomal (479 aa).

(2R)-3-phosphoglycerate-binding residues include Val-23, Asp-24, Phe-25, Asn-26, Arg-39, Ser-61, His-62, Gly-64, Arg-65, Arg-132, His-168, and Arg-169. Positions 214 and 215 each coordinate ADP. Gly-214 serves as a coordination point for CDP. The AMP site is built by Ala-215 and Lys-216. Ala-215 contacts ATP. Ala-215 contributes to the Mg(2+) binding site. Residue Lys-216 participates in (2R)-3-phosphoglycerate binding. Position 219 (Asp-219) interacts with CDP. Asp-219 is a Mg(2+) binding site. Lys-220 and Gly-238 together coordinate ADP. Residue Lys-220 coordinates AMP. Residue Lys-220 participates in ATP binding. Gly-238 is a binding site for CDP. The AMP site is built by Ala-239 and Ala-311. ATP is bound by residues Ala-239 and Ala-311. Positions 311 and 335 each coordinate ADP. Positions 336 and 341 each coordinate CDP. The ADP site is built by Phe-341, Glu-342, Asp-374, and Ser-375. Residue Glu-342 coordinates AMP. Residues Glu-342, Asp-374, and Ser-375 each contribute to the ATP site. Mg(2+) is bound at residue Asp-374.

Belongs to the phosphoglycerate kinase family. As to quaternary structure, monomer. Mg(2+) serves as cofactor.

The protein localises to the glycosome. The catalysed reaction is (2R)-3-phosphoglycerate + ATP = (2R)-3-phospho-glyceroyl phosphate + ADP. Its pathway is carbohydrate degradation; glycolysis; pyruvate from D-glyceraldehyde 3-phosphate: step 2/5. This chain is Phosphoglycerate kinase, glycosomal (PGKC), found in Leishmania major.